A 284-amino-acid chain; its full sequence is BTB/POZ domain-containing protein 2 (284 aa).

The region spanning 37–108 is the BTB domain; it reads SDTTLIIKGE…LYCDSPRIPA (72 aa).

As to quaternary structure, interacts with cul3.

Its subcellular location is the cytoplasm. It localises to the nucleus. The protein operates within protein modification; protein ubiquitination. Its function is as follows. Probable substrate-specific adapter of an E3 ubiquitin-protein ligase complex which mediates the ubiquitination and subsequent proteasomal degradation of target proteins. This chain is BTB/POZ domain-containing protein 2 (btb2), found in Schizosaccharomyces pombe (strain 972 / ATCC 24843) (Fission yeast).